A 1246-amino-acid polypeptide reads, in one-letter code: Myosin-1 (1246 aa).

The disordered stretch occupies residues 1-41; the sequence is MGHSRRPVGGEKKSRGFGRSKAVADVGDGRQTGGKPQVKKA. In terms of domain architecture, Myosin motor spans 51–730; that stretch reads IGVSDLTLLS…TLFALEAMRD (680 aa). ATP is bound at residue 144-151; the sequence is GESGAGKT. Ser-372 is subject to Phosphoserine. The tract at residues 419-501 is actin-binding; the sequence is SIGILDIYGF…PGVFAALNDA (83 aa). IQ domains are found at residues 734–754 and 755–780; these read HNMAIRIQRAWRNYLRYRIEC and AIRIQRFWRRMTGGLELIKVRDQGHK. Positions 788 to 976 constitute a TH1 domain; the sequence is RRRMSLLGSR…TIHTSAGEPP (189 aa). Polar residues predominate over residues 956–970; sequence GSSNVDTYKSSTIHT. Disordered regions lie at residues 956–1080 and 1127–1246; these read GSSN…PKKP and WTPQ…DDEW. Composition is skewed to pro residues over residues 1033–1045 and 1065–1078; these read APQPAAVPRPVPQ and APPPPPPVSPPAPK. An SH3 domain is found at 1077–1138; it reads PKKPMAKVLY…PQAYLEEQKA (62 aa). Low complexity-rich tracts occupy residues 1151–1166 and 1214–1228; these read TPATNGTATAAAAKAK and NSASNASLAGGLAEA. The span at 1229-1240 shows a compositional bias: basic and acidic residues; that stretch reads LRQRQEAMHGKQ.

The protein belongs to the TRAFAC class myosin-kinesin ATPase superfamily. Myosin family. Phosphorylation of the TEDS site (Ser-372) is required for the polarization of the actin cytoskeleton. Phosphorylation probably activates the myosin-I ATPase activity.

The protein localises to the cytoplasm. It is found in the cytoskeleton. It localises to the actin patch. Type-I myosin implicated in the organization of the actin cytoskeleton. Required for proper actin cytoskeleton polarization. At the cell cortex, assembles in patch-like structures together with proteins from the actin-polymerizing machinery and promotes actin assembly. Functions as actin nucleation-promoting factor (NPF) for the Arp2/3 complex. Plays an important role in polarized growth, spore germination, hyphal morphogenesis, and septal wall formation. The protein is Myosin-1 (myoA) of Aspergillus terreus (strain NIH 2624 / FGSC A1156).